Consider the following 535-residue polypeptide: GMP synthase [glutamine-hydrolyzing] (535 aa).

The Glutamine amidotransferase type-1 domain occupies Lys-24 to Asp-217. The Nucleophile role is filled by Cys-101. Catalysis depends on residues His-191 and Glu-193. A GMPS ATP-PPase domain is found at Trp-218–Arg-410. Position 245 to 251 (Ser-245 to Ser-251) interacts with ATP.

As to quaternary structure, homodimer.

The catalysed reaction is XMP + L-glutamine + ATP + H2O = GMP + L-glutamate + AMP + diphosphate + 2 H(+). Its pathway is purine metabolism; GMP biosynthesis; GMP from XMP (L-Gln route): step 1/1. Its function is as follows. Catalyzes the synthesis of GMP from XMP. The sequence is that of GMP synthase [glutamine-hydrolyzing] from Nitrobacter winogradskyi (strain ATCC 25391 / DSM 10237 / CIP 104748 / NCIMB 11846 / Nb-255).